The chain runs to 97 residues: Large ribosomal subunit protein uL23 (97 aa).

Belongs to the universal ribosomal protein uL23 family. In terms of assembly, part of the 50S ribosomal subunit. Contacts protein L29, and trigger factor when it is bound to the ribosome.

In terms of biological role, one of the early assembly proteins it binds 23S rRNA. One of the proteins that surrounds the polypeptide exit tunnel on the outside of the ribosome. Forms the main docking site for trigger factor binding to the ribosome. In Brucella anthropi (strain ATCC 49188 / DSM 6882 / CCUG 24695 / JCM 21032 / LMG 3331 / NBRC 15819 / NCTC 12168 / Alc 37) (Ochrobactrum anthropi), this protein is Large ribosomal subunit protein uL23.